We begin with the raw amino-acid sequence, 355 residues long: Class E basic helix-loop-helix protein 22 (355 aa).

2 disordered regions span residues 34-90 (AFRS…GGGG) and 128-215 (GRGS…KEQK). Gly residues-rich tracts occupy residues 81 to 90 (GGGGASGGGG) and 185 to 207 (GGSG…GGGS). In terms of domain architecture, bHLH spans 216–270 (ALRLNINARERRRMHDLNDALDELRAVIPYAHSPSVRKLSKIATLLLAKNYILMQ).

Interacts with PRDM8. In terms of tissue distribution, brain-specific, with the highest expression in the cerebellum.

Its subcellular location is the nucleus. Its function is as follows. Inhibits DNA binding of TCF3/E47 homodimers and TCF3 (E47)/NEUROD1 heterodimers and acts as a strong repressor of Neurod1 and Myod-responsive genes, probably by heterodimerization with class a basic helix-loop-helix factors. Despite the presence of an intact basic domain, does not bind to DNA. In the brain, may function as an area-specific transcription factor that regulates the postmitotic acquisition of area identities and elucidate the genetic hierarchy between progenitors and postmitotic neurons driving neocortical arealization. May be required for the survival of a specific population of inhibitory neurons in the superficial laminae of the spinal cord dorsal horn that may regulate pruritis. Seems to play a crucial role in the retinogenesis, in the specification of amacrine and bipolar subtypes. Forms with PRDM8 a transcriptional repressor complex controlling genes involved in neural development and neuronal differentiation. The protein is Class E basic helix-loop-helix protein 22 (Bhlhe22) of Mus musculus (Mouse).